Reading from the N-terminus, the 369-residue chain is Biotin synthase (369 aa).

One can recognise a Radical SAM core domain in the interval 51–269; sequence NYVQVSTLLS…IAVARIMMPK (219 aa). Cys-66, Cys-70, and Cys-73 together coordinate [4Fe-4S] cluster. The [2Fe-2S] cluster site is built by Cys-110, Cys-141, Cys-201, and Arg-273.

Belongs to the radical SAM superfamily. Biotin synthase family. As to quaternary structure, homodimer. Requires [4Fe-4S] cluster as cofactor. [2Fe-2S] cluster is required as a cofactor.

The enzyme catalyses (4R,5S)-dethiobiotin + (sulfur carrier)-SH + 2 reduced [2Fe-2S]-[ferredoxin] + 2 S-adenosyl-L-methionine = (sulfur carrier)-H + biotin + 2 5'-deoxyadenosine + 2 L-methionine + 2 oxidized [2Fe-2S]-[ferredoxin]. It functions in the pathway cofactor biosynthesis; biotin biosynthesis; biotin from 7,8-diaminononanoate: step 2/2. Catalyzes the conversion of dethiobiotin (DTB) to biotin by the insertion of a sulfur atom into dethiobiotin via a radical-based mechanism. The polypeptide is Biotin synthase (Pseudoalteromonas atlantica (strain T6c / ATCC BAA-1087)).